Consider the following 231-residue polypeptide: Putative S-adenosylmethionine-dependent methyltransferase RcsF (231 aa).

One can recognise a TsaA-like domain in the interval 5–142; that stretch reads VSPIGYIRSC…YVPYADAVAD (138 aa). S-adenosyl-L-methionine-binding positions include 22 to 24, 63 to 64, R91, and 122 to 125; these read PRQ, HQ, and LDGT.

It belongs to the tRNA methyltransferase O family.

This is Putative S-adenosylmethionine-dependent methyltransferase RcsF (rcsF) from Pseudomonas aeruginosa (strain ATCC 15692 / DSM 22644 / CIP 104116 / JCM 14847 / LMG 12228 / 1C / PRS 101 / PAO1).